The chain runs to 95 residues: Ascorbate-specific PTS system EIIB component (95 aa).

Residues 1–95 (MENKNLHIIA…EIKQALSKVL (95 aa)) form the PTS EIIB type-2 domain. Cys-12 acts as the Phosphocysteine intermediate in catalysis. Position 12 is a phosphocysteine (Cys-12).

It is found in the cytoplasm. The catalysed reaction is N(pros)-phospho-L-histidyl-[protein] + L-ascorbate(out) = L-ascorbate 6-phosphate(in) + L-histidyl-[protein]. Functionally, the phosphoenolpyruvate-dependent sugar phosphotransferase system (sugar PTS), a major carbohydrate active transport system, catalyzes the phosphorylation of incoming sugar substrates concomitantly with their translocation across the cell membrane. The enzyme II UlaABC PTS system is involved in ascorbate transport. The chain is Ascorbate-specific PTS system EIIB component (ulaB) from Mycoplasma pneumoniae (strain ATCC 29342 / M129 / Subtype 1) (Mycoplasmoides pneumoniae).